A 159-amino-acid chain; its full sequence is Putative pre-16S rRNA nuclease (159 aa).

It belongs to the YqgF nuclease family.

The protein resides in the cytoplasm. In terms of biological role, could be a nuclease involved in processing of the 5'-end of pre-16S rRNA. The protein is Putative pre-16S rRNA nuclease of Bartonella quintana (strain Toulouse) (Rochalimaea quintana).